Reading from the N-terminus, the 363-residue chain is Probable endopolygalacturonase B (363 aa).

The N-terminal stretch at 1 to 20 is a signal peptide; it reads MQLLQSSVIAATVGAALVAA. Residues 21-28 constitute a propeptide that is removed on maturation; the sequence is VPVELEAR. A disulfide bridge links Cys31 with Cys46. PbH1 repeat units follow at residues 158–187, 188–209, 210–230, 239–260, 268–290, and 302–347; these read SDNLNITDVTIDNSAGTAEGHNTDAFDVGS, STYINIDGATVYNQDDCLAINS, GSHITFTNGYCDGGHGLSIGS, VEDVTISNSKVVNSQNGVRIKT, VSNVKFEDITLSGITKYGLIVEQ, and TNGI…SITG. Residue Asn162 is glycosylated (N-linked (GlcNAc...) asparagine). The Proton donor role is filled by Asp202. A disulfide bridge connects residues Cys204 and Cys220. His224 is an active-site residue. 2 cysteine pairs are disulfide-bonded: Cys330–Cys335 and Cys354–Cys363.

The protein belongs to the glycosyl hydrolase 28 family.

The protein resides in the secreted. The enzyme catalyses (1,4-alpha-D-galacturonosyl)n+m + H2O = (1,4-alpha-D-galacturonosyl)n + (1,4-alpha-D-galacturonosyl)m.. Involved in maceration and soft-rotting of plant tissue. Hydrolyzes the 1,4-alpha glycosidic bonds of de-esterified pectate in the smooth region of the plant cell wall. This Aspergillus flavus (strain ATCC 200026 / FGSC A1120 / IAM 13836 / NRRL 3357 / JCM 12722 / SRRC 167) protein is Probable endopolygalacturonase B (pgaB).